Here is a 158-residue protein sequence, read N- to C-terminus: uncharacterized protein (158 aa).

One can recognise an HTH hxlR-type domain in the interval 13–110 (ESVGRALELV…WGDEYLPRPE (98 aa)).

This is an uncharacterized protein from Mycobacterium tuberculosis (strain ATCC 25618 / H37Rv).